We begin with the raw amino-acid sequence, 291 residues long: Probable aquaporin PIP2-4 (291 aa).

Met1 carries the post-translational modification N-acetylmethionine. Residues 1 to 22 (MAKDLDVNESGPPAARDYKDPP) form a disordered region. Ala2 is modified (N-acetylalanine; in Probable aquaporin PIP2-4, N-terminally processed). The Cytoplasmic portion of the chain corresponds to 2–39 (AKDLDVNESGPPAARDYKDPPPAPFFDMEELRKWPLYR). At Lys3 the chain carries N6,N6-dimethyllysine. A helical membrane pass occupies residues 40-60 (AVIAEFVATLLFLYVSILTVI). Residues 61 to 74 (GYKAQTDATAGGVD) are Extracellular-facing. Residues 75 to 95 (CGGVGILGIAWAFGGMIFVLV) traverse the membrane as a helical segment. Topologically, residues 96 to 125 (YCTAGISGGHINPAVTVGLFLARKVSLVRT) are cytoplasmic. The NPA 1 signature appears at 107-109 (NPA). The chain crosses the membrane as a helical span at residues 126–146 (VLYIVAQCLGAICGCGFVKAF). Topologically, residues 147–167 (QSSYYTRYGGGANELADGYNK) are extracellular. The helical transmembrane segment at 168–188 (GTGLGAEIIGTFVLVYTVFSA) threads the bilayer. The Cytoplasmic portion of the chain corresponds to 189 to 201 (TDPKRNARDSHVP). The chain crosses the membrane as a helical span at residues 202-222 (VLAPLPIGFAVFMVHLATIPI). Over 223–249 (TGTGINPARSFGAAVIYNNEKAWDDQW) the chain is Extracellular. The NPA 2 signature appears at 228 to 230 (NPA). The helical transmembrane segment at 250-270 (IFWVGPMIGAAAAAFYHQFIL) threads the bilayer. The Cytoplasmic portion of the chain corresponds to 271–291 (RAAAIKALGSFGSFGSFRSFA). A phosphoserine mark is found at Ser283, Ser286, and Ser289.

This sequence belongs to the MIP/aquaporin (TC 1.A.8) family. PIP (TC 1.A.8.11) subfamily. As to expression, expressed in roots.

It localises to the cell membrane. In terms of biological role, aquaporins facilitate the transport of water and small neutral solutes across cell membranes. This is Probable aquaporin PIP2-4 (PIP2-4) from Arabidopsis thaliana (Mouse-ear cress).